The primary structure comprises 100 residues: Small ribosomal subunit protein uS14c (100 aa).

Residues 1–31 form a disordered region; sequence MARKSLIQREKKRQKLEQKYHSIRRSSKKEI.

This sequence belongs to the universal ribosomal protein uS14 family. Part of the 30S ribosomal subunit.

The protein localises to the plastid. It localises to the chloroplast. Binds 16S rRNA, required for the assembly of 30S particles. This Nicotiana tomentosiformis (Tobacco) protein is Small ribosomal subunit protein uS14c.